Reading from the N-terminus, the 914-residue chain is Isoleucine--tRNA ligase (914 aa).

The short motif at 64-74 (PYANGNFHLGH) is the 'HIGH' region element. Glu-557 serves as a coordination point for L-isoleucyl-5'-AMP. The 'KMSKS' region motif lies at 598 to 602 (PMSKS). Lys-601 lines the ATP pocket. Zn(2+)-binding residues include Cys-889, Cys-892, Cys-906, and Cys-909.

Belongs to the class-I aminoacyl-tRNA synthetase family. IleS type 1 subfamily. Monomer. Zn(2+) is required as a cofactor.

It is found in the cytoplasm. It carries out the reaction tRNA(Ile) + L-isoleucine + ATP = L-isoleucyl-tRNA(Ile) + AMP + diphosphate. Catalyzes the attachment of isoleucine to tRNA(Ile). As IleRS can inadvertently accommodate and process structurally similar amino acids such as valine, to avoid such errors it has two additional distinct tRNA(Ile)-dependent editing activities. One activity is designated as 'pretransfer' editing and involves the hydrolysis of activated Val-AMP. The other activity is designated 'posttransfer' editing and involves deacylation of mischarged Val-tRNA(Ile). The chain is Isoleucine--tRNA ligase from Leptospira interrogans serogroup Icterohaemorrhagiae serovar copenhageni (strain Fiocruz L1-130).